The sequence spans 283 residues: MGVFMEKLKTYLELIRVKNCITASIGGIIGYLISSNFEIDILKSLLVFFVVFFVCAYGNVINDIFDIEIDRINKPSRPLPSGKIKLNEAKKFSAILLILGLVLSLFINIYALIIAVINALFLYLYAKKYKKYKPIGNFIIGYLTGSVFLFGGVAGKNVMPVVILFLCSLLSIWGREIVKDFEDMEGDKKEGVISLPIKYGKKSLYFATFLVVLAVILSPLPYILKIFGIWYLILIAICDILFIYAMALLLKEPNKETASKVSKFLKIIMNIVLLAFIVGAIKL.

The next 8 helical transmembrane spans lie at 21-41 (ITASIGGIIGYLISSNFEIDI), 45-65 (LLVFFVVFFVCAYGNVINDIF), 97-117 (LILGLVLSLFINIYALIIAVI), 135-155 (IGNFIIGYLTGSVFLFGGVAG), 158-178 (VMPVVILFLCSLLSIWGREIV), 204-224 (LYFATFLVVLAVILSPLPYIL), 226-246 (IFGIWYLILIAICDILFIYAM), and 261-281 (VSKFLKIIMNIVLLAFIVGAI).

It belongs to the UbiA prenyltransferase family. DGGGP synthase subfamily. Mg(2+) serves as cofactor.

Its subcellular location is the cell membrane. The enzyme catalyses sn-3-O-(geranylgeranyl)glycerol 1-phosphate + (2E,6E,10E)-geranylgeranyl diphosphate = 2,3-bis-O-(geranylgeranyl)-sn-glycerol 1-phosphate + diphosphate. It functions in the pathway membrane lipid metabolism; glycerophospholipid metabolism. Prenyltransferase that catalyzes the transfer of the geranylgeranyl moiety of geranylgeranyl diphosphate (GGPP) to the C2 hydroxyl of (S)-3-O-geranylgeranylglyceryl phosphate (GGGP). This reaction is the second ether-bond-formation step in the biosynthesis of archaeal membrane lipids. This chain is Digeranylgeranylglyceryl phosphate synthase, found in Methanocaldococcus jannaschii (strain ATCC 43067 / DSM 2661 / JAL-1 / JCM 10045 / NBRC 100440) (Methanococcus jannaschii).